The following is a 482-amino-acid chain: Aspartyl/glutamyl-tRNA(Asn/Gln) amidotransferase subunit B (482 aa).

It belongs to the GatB/GatE family. GatB subfamily. As to quaternary structure, heterotrimer of A, B and C subunits.

It catalyses the reaction L-glutamyl-tRNA(Gln) + L-glutamine + ATP + H2O = L-glutaminyl-tRNA(Gln) + L-glutamate + ADP + phosphate + H(+). The enzyme catalyses L-aspartyl-tRNA(Asn) + L-glutamine + ATP + H2O = L-asparaginyl-tRNA(Asn) + L-glutamate + ADP + phosphate + 2 H(+). Allows the formation of correctly charged Asn-tRNA(Asn) or Gln-tRNA(Gln) through the transamidation of misacylated Asp-tRNA(Asn) or Glu-tRNA(Gln) in organisms which lack either or both of asparaginyl-tRNA or glutaminyl-tRNA synthetases. The reaction takes place in the presence of glutamine and ATP through an activated phospho-Asp-tRNA(Asn) or phospho-Glu-tRNA(Gln). The polypeptide is Aspartyl/glutamyl-tRNA(Asn/Gln) amidotransferase subunit B (Thermotoga petrophila (strain ATCC BAA-488 / DSM 13995 / JCM 10881 / RKU-1)).